Reading from the N-terminus, the 225-residue chain is MAIKDWPVGEGPREKLLNQGVKQLSDAELLAVLLRVGLKGLSAVELARTMINEFGGLRGLLAASQTQVCRLDGIGPVKFAQMQAAVELGTRISQENLQRGKILSDPDLTRDYLMRQLSDRAYEVFAILLLDSQHRVIQFVELFRGTINSASVYPREVVSLVLEKKAAAVIVCHNHPSGIAEPSTADRRITERLKQALQTIDVSLLDHMVVGDREIVSFAERGWID.

Positions 102–224 (ILSDPDLTRD…IVSFAERGWI (123 aa)) constitute an MPN domain. Residues His173, His175, and Asp186 each contribute to the Zn(2+) site. The JAMM motif signature appears at 173–186 (HNHPSGIAEPSTAD).

The protein belongs to the UPF0758 family.

The sequence is that of UPF0758 protein Shal_0429 from Shewanella halifaxensis (strain HAW-EB4).